A 352-amino-acid polypeptide reads, in one-letter code: MDLTVDPNLHSLINSTTHRWIFVGGKGGVGKTTSSCSIAIQMALSQPSKQFLLISTDPAHNLSDAFGEKFGKDARKVTGMDNLSCMEIDPSAALNDMNDMAVSRANENGNGGDGLSDILQGGALADLTGSIPGIDEALSFMEVMKHIKNQENGEGDRYDTVIFDTAPTGHTLRFLQLPNTLSKLLEKFGEITGKLGPMLNSLAGAGNVDISGKLNELKENVEKIRQQFTDPDLTTFVCVCISEFLSLYETERLIQELISYDMDVNSIIVNQLLFAEYDAEHNCKRCQARWKMQKKYLDQIDELYEDFHVVKMPLCAGEIRGLNNLKKFSAFLNKEYDPVADGKVIYELEEKN.

Residue 26–33 coordinates ATP; sequence KGGVGKTT. D57 is an active-site residue. Residues E243 and N270 each contribute to the ATP site. C283 and C286 together coordinate Zn(2+).

The protein belongs to the arsA ATPase family. In terms of assembly, homodimer. Component of the Golgi to ER traffic (GET) complex, which is composed of GET1, GET2 and GET3. Within the complex, GET1 and GET2 form a heterotetramer which is stabilized by phosphatidylinositol binding and which binds to the GET3 homodimer. Interacts with the chloride channel protein GEF1.

Its subcellular location is the cytoplasm. The protein localises to the endoplasmic reticulum. It is found in the golgi apparatus. In terms of biological role, ATPase required for the post-translational delivery of tail-anchored (TA) proteins to the endoplasmic reticulum. Recognizes and selectively binds the transmembrane domain of TA proteins in the cytosol. This complex then targets to the endoplasmic reticulum by membrane-bound receptors GET1 and GET2, where the tail-anchored protein is released for insertion. This process is regulated by ATP binding and hydrolysis. ATP binding drives the homodimer towards the closed dimer state, facilitating recognition of newly synthesized TA membrane proteins. ATP hydrolysis is required for insertion. Subsequently, the homodimer reverts towards the open dimer state, lowering its affinity for the GET1-GET2 receptor, and returning it to the cytosol to initiate a new round of targeting. Cooperates with the HDEL receptor ERD2 to mediate the ATP-dependent retrieval of resident ER proteins that contain a C-terminal H-D-E-L retention signal from the Golgi to the ER. Involved in low-level resistance to the oxyanions arsenite and arsenate, and in heat tolerance. This chain is ATPase GET3, found in Vanderwaltozyma polyspora (strain ATCC 22028 / DSM 70294 / BCRC 21397 / CBS 2163 / NBRC 10782 / NRRL Y-8283 / UCD 57-17) (Kluyveromyces polysporus).